A 289-amino-acid chain; its full sequence is Phospholipase A1 (289 aa).

Positions Met1 to Ala20 are cleaved as a signal peptide. At Gln21 to Leu52 the chain is on the periplasmic side. A beta stranded transmembrane segment spans residues Tyr53–Thr65. Residues Ser66–Lys84 lie on the Extracellular side of the membrane. Residues Asp85–Arg99 form a beta stranded membrane-spanning segment. The Periplasmic portion of the chain corresponds to Gly100–Asn105. Residues Ser106–Trp118 traverse the membrane as a beta stranded segment. The Extracellular segment spans residues Gln119 to Pro128. Ser126 lines the Ca(2+) pocket. The beta stranded transmembrane segment at Phe129–Val148 threads the bilayer. Residues Gly149 to Asp150 lie on the Periplasmic side of the membrane. A beta stranded transmembrane segment spans residues Trp151–Ser164. His162 acts as the Proton acceptor in catalysis. Ser164 acts as the Nucleophile in catalysis. Topologically, residues Asn165–Arg173 are extracellular. Residues Arg167 and Ser172 each coordinate Ca(2+). Residues Ser174–Asn186 form a beta stranded membrane-spanning segment. Topologically, residues Gly187–Asn188 are periplasmic. A beta stranded membrane pass occupies residues Trp189–Val198. At Ile199–Gln216 the chain is on the extracellular side. Asp204 is a binding site for Ca(2+). The beta stranded transmembrane segment at Leu217–Leu223 threads the bilayer. The Periplasmic portion of the chain corresponds to Gly224–Glu225. Residues Ala226–Tyr234 traverse the membrane as a beta stranded segment. Topologically, residues Asn235–Gly241 are extracellular. Residues Gly242–Pro250 form a beta stranded membrane-spanning segment. Residues Ile251–Val255 lie on the Periplasmic side of the membrane. Residues Arg256–Tyr265 form a beta stranded membrane-spanning segment. At Gly266–Phe274 the chain is on the extracellular side. A beta stranded transmembrane segment spans residues Asn275 to Asn286. Over Asp287–Phe289 the chain is Periplasmic.

This sequence belongs to the phospholipase A1 family. Homodimer; dimerization is reversible, and the dimeric form is the active one. Ca(2+) serves as cofactor.

It is found in the cell outer membrane. The enzyme catalyses a 1,2-diacyl-sn-glycero-3-phosphocholine + H2O = a 2-acyl-sn-glycero-3-phosphocholine + a fatty acid + H(+). It carries out the reaction a 1,2-diacyl-sn-glycero-3-phosphocholine + H2O = a 1-acyl-sn-glycero-3-phosphocholine + a fatty acid + H(+). Hydrolysis of phosphatidylcholine with phospholipase A2 (EC 3.1.1.4) and phospholipase A1 (EC 3.1.1.32) activities. The chain is Phospholipase A1 (pldA) from Proteus vulgaris.